The following is a 216-amino-acid chain: uncharacterized protein (216 aa).

This is an uncharacterized protein from Saccharomyces cerevisiae (strain ATCC 204508 / S288c) (Baker's yeast).